The chain runs to 176 residues: Cytochrome b561 homolog 1 (176 aa).

Over 1–7 the chain is Cytoplasmic; the sequence is MNRFSKT. A helical membrane pass occupies residues 8–28; it reads QIYLHWITLLFVAITYAAMEL. H12 is a heme b binding site. Residues 29–45 lie on the Periplasmic side of the membrane; sequence RGWFPKGSSTYLLMRET. H46 contacts heme b. Residues 46-63 traverse the membrane as a helical segment; the sequence is HYNAGIFVWVLMFSRLII. The Cytoplasmic segment spans residues 64 to 85; sequence KHRYSDPSIVPPPPAWQMKAAS. Residues 86–106 form a helical membrane-spanning segment; the sequence is LMHIMLYITFLALPLLGIALM. At 107 to 141 the chain is on the periplasmic side; sequence AYSGKSWSFLGFNVSPFVTPNSEIKALIKNIHETW. Heme b is bound by residues H138 and H152. Residues 142-162 form a helical membrane-spanning segment; the sequence is ANIGYFLIAAHAGAALFHHYI. The Cytoplasmic segment spans residues 163–176; the sequence is QKDNTLLRMMPRRK.

It belongs to the cytochrome b561 family. The cofactor is heme b.

Its subcellular location is the cell inner membrane. The sequence is that of Cytochrome b561 homolog 1 (yodB) from Escherichia coli (strain K12).